Here is an 899-residue protein sequence, read N- to C-terminus: MFGSIIKKIVGSKNERELKRLWPIVEKINGLEPQMAALTDDQLRNKTSEFKERCAKGESLDSLLPEAFAVCREAGKRVHNMRHFDVQLIGGMVLHSGKIAEMKTGEGKTLVATLPAYLNALTGKGVHVVTVNDYLAKRDSDWMGRIYNFLGLSVGVIVHGLDDEERREAYAADITYGTNNEFGFDYLRDNMKFSLDDYVQRPFYFSIVDEVDSILIDEARTPLIISGPTEDSTDKYYIIDRVIPHLKKGEMKEVEANTLSGKKKEYTGDFTVDEKARSATLTEEGVLKVEKLLKIDNLYDPRHMEFLHHVNQALRAHALFRRDVDYVVKEGEVIIVDEFTGRLMPGRRWSDGLHQAIEAKEGVEIENENQTLATITFQNYFRMYEKLSGMTGTADTEAEEFHKIYKLDVTVIPTNRPLLRPDFPDVIYKTEREKFAAVIEEIKDCHQKGQPVLVGTISIEKSEILSELLKKQGIPHNVLNAKQHEREAEIVAQAGRKGMLTIATNMAGRGTDIVLGGNPDSLAKQWRRENPDAADEEYAAILAKYKAECAAEHDEVVKLGGLHILGTERHESRRIDNQLRGRSGRQGDPGSSRFYLSLEDDLLRIFGSERVSKIMDFLKIEEGEAITHGMITKAIENAQKKVEAHNFEIRKHLIEYDDVMNKQREVIYTQRREILAGEDIRGNFTQMLDDTIEDIAAAFAIDKVHASEWDWQAIVEAVYKTFGFQIDIPAETMDRLAPESFRKLLKESVHEAYEGKLASFGDELMDHLIKVIMLQAIDSQWKDHLLSIDHLKEGIGLRGYGQKDPKQEYKKEAYRLFMDMMARIAEETVEKIFWVQIAREEDVERMEEEQQQQAQKKIVFNLGEEPATAPQPARSKKSASRNDPCPCGSGKKYKKCCGK.

ATP contacts are provided by residues Q87, 105–109 (GEGKT), and D512. Positions 846-899 (MEEEQQQQAQKKIVFNLGEEPATAPQPARSKKSASRNDPCPCGSGKKYKKCCGK) are disordered. The Zn(2+) site is built by C885, C887, C896, and C897.

This sequence belongs to the SecA family. As to quaternary structure, monomer and homodimer. Part of the essential Sec protein translocation apparatus which comprises SecA, SecYEG and auxiliary proteins SecDF-YajC and YidC. The cofactor is Zn(2+).

It is found in the cell inner membrane. The protein resides in the cytoplasm. The catalysed reaction is ATP + H2O + cellular proteinSide 1 = ADP + phosphate + cellular proteinSide 2.. Part of the Sec protein translocase complex. Interacts with the SecYEG preprotein conducting channel. Has a central role in coupling the hydrolysis of ATP to the transfer of proteins into and across the cell membrane, serving as an ATP-driven molecular motor driving the stepwise translocation of polypeptide chains across the membrane. The protein is Protein translocase subunit SecA of Geobacter metallireducens (strain ATCC 53774 / DSM 7210 / GS-15).